The following is a 184-amino-acid chain: Probable RNA 2'-phosphotransferase (184 aa).

This sequence belongs to the KptA/TPT1 family.

Functionally, removes the 2'-phosphate from RNA via an intermediate in which the phosphate is ADP-ribosylated by NAD followed by a presumed transesterification to release the RNA and generate ADP-ribose 1''-2''-cyclic phosphate (APPR&gt;P). May function as an ADP-ribosylase. The polypeptide is Probable RNA 2'-phosphotransferase (Rhizobium johnstonii (strain DSM 114642 / LMG 32736 / 3841) (Rhizobium leguminosarum bv. viciae)).